Here is a 515-residue protein sequence, read N- to C-terminus: Putative asparagine synthetase [glutamine-hydrolyzing] 2 (515 aa).

The active-site For GATase activity is Cys-2. The 228-residue stretch at 2–229 (CGINGIIRFG…ARQNLIFDLD (228 aa)) folds into the Glutamine amidotransferase type-2 domain. L-glutamine contacts are provided by residues 52–56 (RLAIL), 92–94 (NGE), and Asp-114. ATP contacts are provided by residues Ile-306 and 378–379 (SG).

This sequence belongs to the asparagine synthetase family.

The enzyme catalyses L-aspartate + L-glutamine + ATP + H2O = L-asparagine + L-glutamate + AMP + diphosphate + H(+). The protein operates within amino-acid biosynthesis; L-asparagine biosynthesis; L-asparagine from L-aspartate (L-Gln route): step 1/1. The polypeptide is Putative asparagine synthetase [glutamine-hydrolyzing] 2 (Methanocaldococcus jannaschii (strain ATCC 43067 / DSM 2661 / JAL-1 / JCM 10045 / NBRC 100440) (Methanococcus jannaschii)).